Consider the following 267-residue polypeptide: Type II pantothenate kinase (267 aa).

6–13 contributes to the ATP binding site; that stretch reads DAGGTLIK. Residue Glu-70 is the Proton acceptor of the active site. ATP contacts are provided by residues Thr-99, 121 to 125, Tyr-137, and Ser-225; that span reads GGMIQ.

Belongs to the type II pantothenate kinase family. Homodimer.

It is found in the cytoplasm. The catalysed reaction is (R)-pantothenate + ATP = (R)-4'-phosphopantothenate + ADP + H(+). It functions in the pathway cofactor biosynthesis; coenzyme A biosynthesis; CoA from (R)-pantothenate: step 1/5. Its function is as follows. Catalyzes the phosphorylation of pantothenate (Pan), the first step in CoA biosynthesis. The sequence is that of Type II pantothenate kinase from Staphylococcus aureus (strain Mu50 / ATCC 700699).